Here is a 492-residue protein sequence, read N- to C-terminus: 2,3-bisphosphoglycerate-independent phosphoglycerate mutase (492 aa).

Mn(2+) contacts are provided by Asp-11 and Ser-61. The active-site Phosphoserine intermediate is the Ser-61. Substrate contacts are provided by residues His-118, 147–148 (RD), Arg-178, Arg-184, 248–251 (RNDR), and Lys-320. Mn(2+) is bound by residues Asp-386, His-390, Asp-427, His-428, and His-445.

This sequence belongs to the BPG-independent phosphoglycerate mutase family. In terms of assembly, monomer. The cofactor is Mn(2+).

It catalyses the reaction (2R)-2-phosphoglycerate = (2R)-3-phosphoglycerate. The protein operates within carbohydrate degradation; glycolysis; pyruvate from D-glyceraldehyde 3-phosphate: step 3/5. Functionally, catalyzes the interconversion of 2-phosphoglycerate and 3-phosphoglycerate. This is 2,3-bisphosphoglycerate-independent phosphoglycerate mutase from Campylobacter jejuni subsp. jejuni serotype O:6 (strain 81116 / NCTC 11828).